The sequence spans 159 residues: Cytochrome c-type biogenesis protein CcmE (159 aa).

Topologically, residues 1–8 are cytoplasmic; sequence MNIRRKNR. Residues 9 to 29 traverse the membrane as a helical; Signal-anchor for type II membrane protein segment; that stretch reads LWIACAVLAGLALTIGLVLYA. Residues 30–159 are Periplasmic-facing; that stretch reads LRSNIDLFYT…PASVYKDPAS (130 aa). Heme is bound by residues His-130 and Tyr-134. The segment covering 134 to 147 has biased composition (basic and acidic residues); it reads YTPPEVEKAMEANH. Residues 134–159 are disordered; sequence YTPPEVEKAMEANHRRPASVYKDPAS.

It belongs to the CcmE/CycJ family.

The protein localises to the cell inner membrane. Heme chaperone required for the biogenesis of c-type cytochromes. Transiently binds heme delivered by CcmC and transfers the heme to apo-cytochromes in a process facilitated by CcmF and CcmH. The protein is Cytochrome c-type biogenesis protein CcmE of Escherichia coli (strain SMS-3-5 / SECEC).